The chain runs to 65 residues: Large ribosomal subunit protein bL35 (65 aa).

Belongs to the bacterial ribosomal protein bL35 family.

The protein is Large ribosomal subunit protein bL35 of Oleidesulfovibrio alaskensis (strain ATCC BAA-1058 / DSM 17464 / G20) (Desulfovibrio alaskensis).